A 298-amino-acid polypeptide reads, in one-letter code: Inosose dehydratase (298 aa).

This sequence belongs to the IolE/MocC family. The cofactor is glutathione. It depends on Co(2+) as a cofactor. Mn(2+) is required as a cofactor.

It catalyses the reaction scyllo-inosose = 3D-3,5/4-trihydroxycyclohexane-1,2-dione + H2O. It functions in the pathway polyol metabolism; myo-inositol degradation into acetyl-CoA; acetyl-CoA from myo-inositol: step 2/7. Catalyzes the dehydration of inosose (2-keto-myo-inositol, 2KMI or 2,4,6/3,5-pentahydroxycyclohexanone) to 3D-(3,5/4)-trihydroxycyclohexane-1,2-dione (D-2,3-diketo-4-deoxy-epi-inositol). The protein is Inosose dehydratase of Lacticaseibacillus casei (Lactobacillus casei).